A 266-amino-acid chain; its full sequence is Oxygen-evolving enhancer protein 2-3, chloroplastic (266 aa).

A chloroplast-targeting transit peptide spans 1-80 (MASTQCFLHH…VGSKVSPADA (80 aa)).

This sequence belongs to the PsbP family.

The protein localises to the plastid. It is found in the chloroplast thylakoid membrane. May be involved in the regulation of photosystem II. This is Oxygen-evolving enhancer protein 2-3, chloroplastic (PSBP3) from Nicotiana tabacum (Common tobacco).